The primary structure comprises 290 residues: Bifunctional protein FolD 3 (290 aa).

NADP(+)-binding positions include G163–S165 and I229.

This sequence belongs to the tetrahydrofolate dehydrogenase/cyclohydrolase family. As to quaternary structure, homodimer.

The catalysed reaction is (6R)-5,10-methylene-5,6,7,8-tetrahydrofolate + NADP(+) = (6R)-5,10-methenyltetrahydrofolate + NADPH. The enzyme catalyses (6R)-5,10-methenyltetrahydrofolate + H2O = (6R)-10-formyltetrahydrofolate + H(+). Its pathway is one-carbon metabolism; tetrahydrofolate interconversion. Functionally, catalyzes the oxidation of 5,10-methylenetetrahydrofolate to 5,10-methenyltetrahydrofolate and then the hydrolysis of 5,10-methenyltetrahydrofolate to 10-formyltetrahydrofolate. The polypeptide is Bifunctional protein FolD 3 (Roseobacter denitrificans (strain ATCC 33942 / OCh 114) (Erythrobacter sp. (strain OCh 114))).